Reading from the N-terminus, the 119-residue chain is FAD-linked sulfhydryl oxidase (119 aa).

Residues 1–97 enclose the ERV/ALR sulfhydryl oxidase domain; the sequence is MLHWGPKYWR…ISWSEYKNIY (97 aa). Cys44 and Cys47 are disulfide-bonded.

The protein belongs to the asfivirus B119L family. Interacts with A151R. Requires FAD as cofactor.

The protein resides in the host cytoplasm. Its subcellular location is the virion. It catalyses the reaction 2 R'C(R)SH + O2 = R'C(R)S-S(R)CR' + H2O2. In terms of biological role, FAD-dependent sulfhydryl oxidase that catalyzes the formation of disulfide bonds in viral proteins produced in the cell cytoplasm. Involved in virion maturation. In African swine fever virus (isolate Warthog/Namibia/Wart80/1980) (ASFV), this protein is FAD-linked sulfhydryl oxidase.